The following is a 211-amino-acid chain: Protein-L-isoaspartate O-methyltransferase 1 (211 aa).

Ser-62 is an active-site residue.

This sequence belongs to the methyltransferase superfamily. L-isoaspartyl/D-aspartyl protein methyltransferase family.

The protein localises to the cytoplasm. The enzyme catalyses [protein]-L-isoaspartate + S-adenosyl-L-methionine = [protein]-L-isoaspartate alpha-methyl ester + S-adenosyl-L-homocysteine. Its function is as follows. Catalyzes the methyl esterification of L-isoaspartyl residues in peptides and proteins that result from spontaneous decomposition of normal L-aspartyl and L-asparaginyl residues. It plays a role in the repair and/or degradation of damaged proteins. This chain is Protein-L-isoaspartate O-methyltransferase 1, found in Shewanella sediminis (strain HAW-EB3).